The following is a 311-amino-acid chain: Ribosomal RNA large subunit methyltransferase F (311 aa).

Belongs to the methyltransferase superfamily. METTL16/RlmF family.

Its subcellular location is the cytoplasm. The catalysed reaction is adenosine(1618) in 23S rRNA + S-adenosyl-L-methionine = N(6)-methyladenosine(1618) in 23S rRNA + S-adenosyl-L-homocysteine + H(+). In terms of biological role, specifically methylates the adenine in position 1618 of 23S rRNA. The sequence is that of Ribosomal RNA large subunit methyltransferase F from Pectobacterium atrosepticum (strain SCRI 1043 / ATCC BAA-672) (Erwinia carotovora subsp. atroseptica).